A 1466-amino-acid polypeptide reads, in one-letter code: ABC transporter C family member 6 (1466 aa).

The next 10 membrane-spanning stretches (helical) occupy residues 16-36, 63-83, 91-111, 128-148, 158-178, 286-306, 322-339, 400-420, 425-445, and 512-532; these read SVLS…SWLF, LVLI…LLSC, WPFL…VYLF, VWWV…FVLY, FVIS…SCLW, IVLS…APYL, NQGY…LVEC, WFMH…WILY, LGSI…YPFA, and SVLW…CLLL. The ABC transmembrane type-1 1 domain occupies 286–567; that stretch reads IVLSALLAFV…LPETISMIVQ (282 aa). The ABC transporter 1 domain occupies 601 to 824; the sequence is VEISNGTFSW…GTDFMELVGA (224 aa). ATP is bound at residue 636-643; that stretch reads GTVGSGKS. The interval 840-876 is disordered; it reads ASEKSTTDKENEVLHHKEKQENGSDNKPSGQLVQEEE. Positions 844–863 are enriched in basic and acidic residues; it reads STTDKENEVLHHKEKQENGS. 3 helical membrane-spanning segments follow: residues 890-910, 937-957, and 1026-1046; these read YMAL…QVLF, GFTL…CILI, and ILGI…VFIP. Positions 900 to 1182 constitute an ABC transmembrane type-1 2 domain; the sequence is IPLILVVQVL…LIWTLCDLEN (283 aa). The region spanning 1219 to 1453 is the ABC transporter 2 domain; sequence ITICNLQVRY…RSSLFSKLVA (235 aa). 1253-1260 lines the ATP pocket; sequence GRTGCGKS.

It belongs to the ABC transporter superfamily. ABCC family. Conjugate transporter (TC 3.A.1.208) subfamily. In terms of tissue distribution, ubiquitous.

Its subcellular location is the membrane. The catalysed reaction is ATP + H2O + xenobioticSide 1 = ADP + phosphate + xenobioticSide 2.. In terms of biological role, pump for glutathione S-conjugates. The chain is ABC transporter C family member 6 (ABCC6) from Arabidopsis thaliana (Mouse-ear cress).